The primary structure comprises 298 residues: Probable 3-hydroxyacyl-CoA dehydrogenase F54C8.1 (298 aa).

Belongs to the 3-hydroxyacyl-CoA dehydrogenase family. Homodimer.

It localises to the mitochondrion matrix. The enzyme catalyses a (3S)-3-hydroxyacyl-CoA + NAD(+) = a 3-oxoacyl-CoA + NADH + H(+). The protein operates within lipid metabolism; fatty acid beta-oxidation. This chain is Probable 3-hydroxyacyl-CoA dehydrogenase F54C8.1, found in Caenorhabditis elegans.